A 39-amino-acid polypeptide reads, in one-letter code: AGRGKQGGKVRAKAKTRSSRAGLQFPVGRVHRLLRKGNY.

Residues 1 to 18 (AGRGKQGGKVRAKAKTRS) are compositionally biased toward basic residues. The disordered stretch occupies residues 1-24 (AGRGKQGGKVRAKAKTRSSRAGLQ). At Lys5 the chain carries N6-(2-hydroxyisobutyryl)lysine. The residue at position 5 (Lys5) is an N6-acetyllysine. Position 9 is an N6-(2-hydroxyisobutyryl)lysine; alternate (Lys9). Position 9 is an N6-lactoyllysine; alternate (Lys9). Lys9 is subject to N6-succinyllysine. Glycyl lysine isopeptide (Lys-Gly) (interchain with G-Cter in ubiquitin) cross-links involve residues Lys13 and Lys15. Lys36 carries the post-translational modification N6-(2-hydroxyisobutyryl)lysine; alternate.

It belongs to the histone H2A family. The nucleosome is a histone octamer containing two molecules each of H2A, H2B, H3 and H4 assembled in one H3-H4 heterotetramer and two H2A-H2B heterodimers. The octamer wraps approximately 147 bp of DNA. Post-translationally, monoubiquitination of C-terminus gives a specific tag for epigenetic transcriptional repression. Following DNA double-strand breaks (DSBs), it is ubiquitinated through 'Lys-63' linkage of ubiquitin moieties.

It is found in the nucleus. The protein localises to the chromosome. Its function is as follows. Core component of nucleosome. Nucleosomes wrap and compact DNA into chromatin, limiting DNA accessibility to the cellular machineries which require DNA as a template. Histones thereby play a central role in transcription regulation, DNA repair, DNA replication and chromosomal stability. DNA accessibility is regulated via a complex set of post-translational modifications of histones, also called histone code, and nucleosome remodeling. In terms of biological role, buforins are strong antimicrobial activities in vitro against a broad-spectrum of microorganisms including fungi. Buforin II is more potent than buforin I. The chain is Histone H2A from Bufo gargarizans (Asian toad).